We begin with the raw amino-acid sequence, 300 residues long: Acetylglutamate kinase (300 aa).

Substrate is bound by residues 73-74 (GG), Arg-95, and Asn-197.

It belongs to the acetylglutamate kinase family. ArgB subfamily.

The protein resides in the cytoplasm. It carries out the reaction N-acetyl-L-glutamate + ATP = N-acetyl-L-glutamyl 5-phosphate + ADP. It participates in amino-acid biosynthesis; L-arginine biosynthesis; N(2)-acetyl-L-ornithine from L-glutamate: step 2/4. Its function is as follows. Catalyzes the ATP-dependent phosphorylation of N-acetyl-L-glutamate. In Bordetella parapertussis (strain 12822 / ATCC BAA-587 / NCTC 13253), this protein is Acetylglutamate kinase.